A 452-amino-acid polypeptide reads, in one-letter code: 1,4-beta-D-glucan cellobiohydrolase A (452 aa).

The signal sequence occupies residues 1–17; sequence MHQRALLFSALLTAVRA. Asn-62 is a glycosylation site (N-linked (GlcNAc...) asparagine). Glu-227 acts as the Nucleophile in catalysis. Residue Glu-232 is the Proton donor of the active site. Residues Asn-285, Asn-335, Asn-402, and Asn-445 are each glycosylated (N-linked (GlcNAc...) asparagine).

This sequence belongs to the glycosyl hydrolase 7 (cellulase C) family.

It localises to the secreted. It carries out the reaction Hydrolysis of (1-&gt;4)-beta-D-glucosidic linkages in cellulose and cellotetraose, releasing cellobiose from the non-reducing ends of the chains.. Its function is as follows. The biological conversion of cellulose to glucose generally requires three types of hydrolytic enzymes: (1) Endoglucanases which cut internal beta-1,4-glucosidic bonds; (2) Exocellobiohydrolases that cut the disaccharide cellobiose from the non-reducing end of the cellulose polymer chain; (3) Beta-1,4-glucosidases which hydrolyze the cellobiose and other short cello-oligosaccharides to glucose. This is 1,4-beta-D-glucan cellobiohydrolase A (cbhA) from Aspergillus niger.